Reading from the N-terminus, the 507-residue chain is Beta-glucosidase 3 (507 aa).

An N-terminal signal peptide occupies residues 1-23 (MELTLSLLTIFLLFFALSGRCSD). Gln-41 provides a ligand contact to a beta-D-glucoside. Asn-64 carries N-linked (GlcNAc...) asparagine glycosylation. A beta-D-glucoside-binding positions include His-138 and 183–184 (NE). The active-site Proton donor is the Glu-184. A disulfide bridge links Cys-203 with Cys-210. Residues Asn-209 and Asn-214 are each glycosylated (N-linked (GlcNAc...) asparagine). A beta-D-glucoside is bound at residue Tyr-326. Asn-361 carries N-linked (GlcNAc...) asparagine glycosylation. An a beta-D-glucoside-binding site is contributed by Glu-394. Residue Glu-394 is the Nucleophile of the active site. Asn-429 carries an N-linked (GlcNAc...) asparagine glycan. A beta-D-glucoside is bound by residues Trp-439 and Phe-455. N-linked (GlcNAc...) asparagine glycosylation is found at Asn-461, Asn-485, and Asn-500.

Belongs to the glycosyl hydrolase 1 family.

It catalyses the reaction Hydrolysis of terminal, non-reducing beta-D-glucosyl residues with release of beta-D-glucose.. This chain is Beta-glucosidase 3, found in Arabidopsis thaliana (Mouse-ear cress).